Here is a 349-residue protein sequence, read N- to C-terminus: Isopentenyl-diphosphate delta-isomerase (349 aa).

Residue 6–7 participates in substrate binding; it reads RK. FMN-binding positions include 62–64, S93, and N122; that span reads AMT. A substrate-binding site is contributed by Q152. E153 contributes to the Mg(2+) binding site. Residues K184, T214, 258–259, and 280–281 each bind FMN; these read GG and AG.

Belongs to the IPP isomerase type 2 family. In terms of assembly, homooctamer. Dimer of tetramers. FMN is required as a cofactor. NADPH serves as cofactor. The cofactor is Mg(2+).

Its subcellular location is the cytoplasm. The catalysed reaction is isopentenyl diphosphate = dimethylallyl diphosphate. In terms of biological role, involved in the biosynthesis of isoprenoids. Catalyzes the 1,3-allylic rearrangement of the homoallylic substrate isopentenyl (IPP) to its allylic isomer, dimethylallyl diphosphate (DMAPP). The protein is Isopentenyl-diphosphate delta-isomerase of Bacillus cereus (strain ATCC 10987 / NRS 248).